A 628-amino-acid polypeptide reads, in one-letter code: DNA-directed RNA polymerase subunit beta' (628 aa).

Zn(2+)-binding residues include cysteine 70, cysteine 72, cysteine 85, and cysteine 88. 3 residues coordinate Mg(2+): aspartate 472, aspartate 474, and aspartate 476.

It belongs to the RNA polymerase beta' chain family. RpoC1 subfamily. In plastids the minimal PEP RNA polymerase catalytic core is composed of four subunits: alpha, beta, beta', and beta''. When a (nuclear-encoded) sigma factor is associated with the core the holoenzyme is formed, which can initiate transcription. Mg(2+) is required as a cofactor. Zn(2+) serves as cofactor.

The protein localises to the plastid. Its subcellular location is the chloroplast. The catalysed reaction is RNA(n) + a ribonucleoside 5'-triphosphate = RNA(n+1) + diphosphate. In terms of biological role, DNA-dependent RNA polymerase catalyzes the transcription of DNA into RNA using the four ribonucleoside triphosphates as substrates. This chain is DNA-directed RNA polymerase subunit beta', found in Gracilaria tenuistipitata var. liui (Red alga).